A 429-amino-acid chain; its full sequence is Enolase (429 aa).

Position 163 (glutamine 163) interacts with (2R)-2-phosphoglycerate. The active-site Proton donor is glutamate 205. The Mg(2+) site is built by aspartate 242, glutamate 285, and aspartate 312. Residues lysine 337, arginine 366, serine 367, and lysine 388 each coordinate (2R)-2-phosphoglycerate. Lysine 337 serves as the catalytic Proton acceptor.

Belongs to the enolase family. The cofactor is Mg(2+).

The protein localises to the cytoplasm. It is found in the secreted. Its subcellular location is the cell surface. It carries out the reaction (2R)-2-phosphoglycerate = phosphoenolpyruvate + H2O. It participates in carbohydrate degradation; glycolysis; pyruvate from D-glyceraldehyde 3-phosphate: step 4/5. Catalyzes the reversible conversion of 2-phosphoglycerate (2-PG) into phosphoenolpyruvate (PEP). It is essential for the degradation of carbohydrates via glycolysis. The chain is Enolase from Oceanobacillus iheyensis (strain DSM 14371 / CIP 107618 / JCM 11309 / KCTC 3954 / HTE831).